The primary structure comprises 398 residues: Ribosomal RNA small subunit methyltransferase B (398 aa).

Residues 221–227 (CGGAGLK), aspartate 242, aspartate 268, and aspartate 283 each bind S-adenosyl-L-methionine. The active-site Nucleophile is cysteine 336.

The protein belongs to the class I-like SAM-binding methyltransferase superfamily. RsmB/NOP family.

The protein resides in the cytoplasm. It catalyses the reaction cytidine(967) in 16S rRNA + S-adenosyl-L-methionine = 5-methylcytidine(967) in 16S rRNA + S-adenosyl-L-homocysteine + H(+). In terms of biological role, specifically methylates the cytosine at position 967 (m5C967) of 16S rRNA. The polypeptide is Ribosomal RNA small subunit methyltransferase B (Thermus thermophilus (strain ATCC 27634 / DSM 579 / HB8)).